We begin with the raw amino-acid sequence, 23 residues long: Apolipophorin-1 (23 aa).

Residues 1–15 are compositionally biased toward basic and acidic residues; that stretch reads SVKSEVDNFDKHLKA. A disordered region spans residues 1–23; that stretch reads SVKSEVDNFDKHLKAESAPFNNE.

Expressed in hemolymph.

The protein resides in the secreted. Its function is as follows. Constitutes the major component of lipophorin, which mediates transport for various types of lipids in hemolymph. Acts by forming lipoprotein particles that bind lipoproteins and lipids. The protein is Apolipophorin-1 of Galleria mellonella (Greater wax moth).